A 129-amino-acid polypeptide reads, in one-letter code: Large ribosomal subunit protein bL21 (129 aa).

The tract at residues 102-129 (TDNAKPTKGPRPKKEKVAKEATKEDAAA) is disordered. Residues 116–129 (EKVAKEATKEDAAA) show a composition bias toward basic and acidic residues.

This sequence belongs to the bacterial ribosomal protein bL21 family. As to quaternary structure, part of the 50S ribosomal subunit. Contacts protein L20.

This protein binds to 23S rRNA in the presence of protein L20. This Bradyrhizobium diazoefficiens (strain JCM 10833 / BCRC 13528 / IAM 13628 / NBRC 14792 / USDA 110) protein is Large ribosomal subunit protein bL21.